The sequence spans 73 residues: Large ribosomal subunit protein bL31 (73 aa).

It belongs to the bacterial ribosomal protein bL31 family. Type A subfamily. In terms of assembly, part of the 50S ribosomal subunit.

Its function is as follows. Binds the 23S rRNA. The sequence is that of Large ribosomal subunit protein bL31 (rpmE) from Ruegeria pomeroyi (strain ATCC 700808 / DSM 15171 / DSS-3) (Silicibacter pomeroyi).